The primary structure comprises 210 residues: Large ribosomal subunit protein bL25 (210 aa).

The segment at 179 to 210 (LPPQQEEEIHSGEQQEPGHPDAEEGRETTPES) is disordered. Residues 185–210 (EEIHSGEQQEPGHPDAEEGRETTPES) are compositionally biased toward basic and acidic residues.

The protein belongs to the bacterial ribosomal protein bL25 family. CTC subfamily. In terms of assembly, part of the 50S ribosomal subunit; part of the 5S rRNA/L5/L18/L25 subcomplex. Contacts the 5S rRNA. Binds to the 5S rRNA independently of L5 and L18.

Its function is as follows. This is one of the proteins that binds to the 5S RNA in the ribosome where it forms part of the central protuberance. This is Large ribosomal subunit protein bL25 from Geobacillus sp. (strain WCH70).